The primary structure comprises 246 residues: Alpha-tubulin N-acetyltransferase (246 aa).

One can recognise an N-acetyltransferase domain in the interval 21 to 202 (LTLVPDGVSR…NNFVVFHSFF (182 aa)). Acetyl-CoA-binding positions include 135–148 (FYVD…GYGK) and 172–181 (SNKLLGFLRK).

The protein belongs to the acetyltransferase ATAT1 family.

The catalysed reaction is L-lysyl-[alpha-tubulin] + acetyl-CoA = N(6)-acetyl-L-lysyl-[alpha-tubulin] + CoA + H(+). In terms of biological role, specifically acetylates 'Lys-40' in alpha-tubulin on the lumenal side of microtubules. Promotes microtubule destabilization and accelerates microtubule dynamics; this activity may be independent of acetylation activity. Acetylates alpha-tubulin with a slow enzymatic rate, due to a catalytic site that is not optimized for acetyl transfer. Enters the microtubule through each end and diffuses quickly throughout the lumen of microtubules. Acetylates only long/old microtubules because of its slow acetylation rate since it does not have time to act on dynamically unstable microtubules before the enzyme is released. This chain is Alpha-tubulin N-acetyltransferase, found in Leishmania infantum.